Reading from the N-terminus, the 525-residue chain is Beta-1,4-xylosyltransferase IRX14 (525 aa).

At 1-35 (MKLSALHQSYLNRRSNSFRSPTSLDSSVDGSGKSL) the chain is on the cytoplasmic side. The helical; Signal-anchor for type II membrane protein transmembrane segment at 36-56 (IAVFWLILHCLCCLISLVLGF) threads the bilayer. Residues 57–525 (RFSRLVFFFL…SSSSKHQERN (469 aa)) are Lumenal-facing. N-linked (GlcNAc...) asparagine glycans are attached at residues Asn-102, Asn-204, and Asn-326. The segment at 452–525 (RTPWPDVPPE…SSSSKHQERN (74 aa)) is disordered. Residues 471 to 488 (PLSQGNTVVVIPKQQQHP) show a composition bias toward polar residues. Basic residues predominate over residues 489 to 503 (TKIRKPKRKSKKSKH). Over residues 508-519 (TDTTTQVYSSSS) the composition is skewed to polar residues.

This sequence belongs to the glycosyltransferase 43 family. Expressed in developing interfascicular fibers and xylem cells in stems and developing secondary xylem in roots.

The protein localises to the golgi apparatus membrane. It catalyses the reaction [(1-&gt;4)-beta-D-xylan](n) + UDP-alpha-D-xylose = [(1-&gt;4)-beta-D-xylan](n+1) + UDP + H(+). Its function is as follows. Involved in the synthesis of the hemicellulose glucuronoxylan, a major component of secondary cell walls. Involved in the elongation of glucuronoxylan xylosyl backbone. Xylan xylosyltransferase that acts cooperatively with IRX9 to achieve the successive addition of xylosyl residues during xylan backbone elongation. Required for the proper composition and structural properties of released seed coat mucilage. Required for the production of highly branched xylan polymers in seed coat mucilage. Xylan with xylose side chains seems to be necessary for pectin attachment to the seed surface. Together with MUCI70, required for xylan and pectin synthesis in seed coat epidermal (SCE) cells. The sequence is that of Beta-1,4-xylosyltransferase IRX14 from Arabidopsis thaliana (Mouse-ear cress).